Reading from the N-terminus, the 299-residue chain is Light-independent protochlorophyllide reductase iron-sulfur ATP-binding protein (299 aa).

Residues 1-23 (MSPLDRTPPSLRGQDGEGSVQVH) are disordered. ATP contacts are provided by residues 43–48 (GIGKST) and Lys-72. Ser-47 is a binding site for Mg(2+). The [4Fe-4S] cluster site is built by Cys-128 and Cys-162. ATP contacts are provided by residues 213–214 (NR) and 237–239 (PDL).

The protein belongs to the NifH/BchL/ChlL family. Homodimer. Protochlorophyllide reductase is composed of three subunits; BchL, BchN and BchB. The cofactor is [4Fe-4S] cluster.

It carries out the reaction chlorophyllide a + oxidized 2[4Fe-4S]-[ferredoxin] + 2 ADP + 2 phosphate = protochlorophyllide a + reduced 2[4Fe-4S]-[ferredoxin] + 2 ATP + 2 H2O. The protein operates within porphyrin-containing compound metabolism; bacteriochlorophyll biosynthesis (light-independent). Component of the dark-operative protochlorophyllide reductase (DPOR) that uses Mg-ATP and reduced ferredoxin to reduce ring D of protochlorophyllide (Pchlide) to form chlorophyllide a (Chlide). This reaction is light-independent. The L component serves as a unique electron donor to the NB-component of the complex, and binds Mg-ATP. In Roseobacter denitrificans (strain ATCC 33942 / OCh 114) (Erythrobacter sp. (strain OCh 114)), this protein is Light-independent protochlorophyllide reductase iron-sulfur ATP-binding protein.